Consider the following 54-residue polypeptide: Large ribosomal subunit protein bL33A (54 aa).

This sequence belongs to the bacterial ribosomal protein bL33 family.

This is Large ribosomal subunit protein bL33A from Streptomyces avermitilis (strain ATCC 31267 / DSM 46492 / JCM 5070 / NBRC 14893 / NCIMB 12804 / NRRL 8165 / MA-4680).